The following is a 409-amino-acid chain: Carbamoyl phosphate synthase arginine-specific small chain (409 aa).

The Glutamine amidotransferase type-1 domain maps to Asn197–Leu389. The Nucleophile role is filled by Cys277. Catalysis depends on residues His362 and Glu364.

It belongs to the CarA family. Heterodimer composed of 2 chains; the small (or glutamine) chain promotes the hydrolysis of glutamine to ammonia, which is used by the large (or ammonia) chain to synthesize carbamoyl phosphate.

The protein resides in the cytoplasm. It carries out the reaction hydrogencarbonate + L-glutamine + 2 ATP + H2O = carbamoyl phosphate + L-glutamate + 2 ADP + phosphate + 2 H(+). It catalyses the reaction L-glutamine + H2O = L-glutamate + NH4(+). It participates in amino-acid biosynthesis; L-arginine biosynthesis; carbamoyl phosphate from bicarbonate: step 1/1. Its function is as follows. Small subunit of the arginine-specific carbamoyl phosphate synthase (CPSase). CPSase catalyzes the formation of carbamoyl phosphate from the ammonia moiety of glutamine, carbonate, and phosphate donated by ATP, constituting the first step of 2 biosynthetic pathways, one leading to arginine and/or urea and the other to pyrimidine nucleotides. The small subunit (glutamine amidotransferase) binds and cleaves glutamine to supply the large subunit with the substrate ammonia. This Kluyveromyces lactis (strain ATCC 8585 / CBS 2359 / DSM 70799 / NBRC 1267 / NRRL Y-1140 / WM37) (Yeast) protein is Carbamoyl phosphate synthase arginine-specific small chain (CPA1).